We begin with the raw amino-acid sequence, 151 residues long: MSTTVKILLLNGPNLNLLGRREPGHYGHQTLATIVSELSTQAQQASVSLEHLQSNAEHELIDAIHATDAQFIIINPAAFTHTSVALRDALLGVAIPFIEVHLSNVHAREPFRQHSYFSDKALGVICGLGAQGYKFALQAALSHLSDKQLQS.

Catalysis depends on Tyr26, which acts as the Proton acceptor. Asn75, His81, and Asp88 together coordinate substrate. The active-site Proton donor is the His101. Substrate contacts are provided by residues 102–103 and Arg112; that span reads LS.

It belongs to the type-II 3-dehydroquinase family. As to quaternary structure, homododecamer.

The enzyme catalyses 3-dehydroquinate = 3-dehydroshikimate + H2O. It functions in the pathway metabolic intermediate biosynthesis; chorismate biosynthesis; chorismate from D-erythrose 4-phosphate and phosphoenolpyruvate: step 3/7. Catalyzes a trans-dehydration via an enolate intermediate. The polypeptide is 3-dehydroquinate dehydratase (Shewanella denitrificans (strain OS217 / ATCC BAA-1090 / DSM 15013)).